Consider the following 295-residue polypeptide: Methionine aminopeptidase (295 aa).

Histidine 62 provides a ligand contact to substrate. Positions 82, 93, and 153 each coordinate a divalent metal cation. Histidine 161 serves as a coordination point for substrate. The a divalent metal cation site is built by glutamate 187 and glutamate 280.

Monomer. Requires Co(2+) as cofactor. It depends on Zn(2+) as a cofactor. The cofactor is Mn(2+). Fe(2+) serves as cofactor.

The enzyme catalyses Release of N-terminal amino acids, preferentially methionine, from peptides and arylamides.. In terms of biological role, removes the N-terminal methionine from nascent proteins. The N-terminal methionine is often cleaved when the second residue in the primary sequence is small and uncharged (Met-Ala-, Cys, Gly, Pro, Ser, Thr, or Val). This Pyrococcus furiosus (strain ATCC 43587 / DSM 3638 / JCM 8422 / Vc1) protein is Methionine aminopeptidase.